Here is a 110-residue protein sequence, read N- to C-terminus: Protein YcgL (110 aa).

One can recognise a YcgL domain in the interval 14-98 (MFCVIYRSSK…PPEDLLKQHL (85 aa)). The interval 88-110 (PPPEDLLKQHLSSVGQNTSHADR) is disordered. Over residues 97–110 (HLSSVGQNTSHADR) the composition is skewed to polar residues.

The polypeptide is Protein YcgL (Salmonella schwarzengrund (strain CVM19633)).